Reading from the N-terminus, the 195-residue chain is NADH-quinone oxidoreductase subunit B (195 aa).

[4Fe-4S] cluster-binding residues include cysteine 74, cysteine 75, cysteine 139, and cysteine 169.

This sequence belongs to the complex I 20 kDa subunit family. NDH-1 is composed of 14 different subunits. Subunits NuoB, C, D, E, F, and G constitute the peripheral sector of the complex. It depends on [4Fe-4S] cluster as a cofactor.

Its subcellular location is the cell inner membrane. The catalysed reaction is a quinone + NADH + 5 H(+)(in) = a quinol + NAD(+) + 4 H(+)(out). Functionally, NDH-1 shuttles electrons from NADH, via FMN and iron-sulfur (Fe-S) centers, to quinones in the respiratory chain. The immediate electron acceptor for the enzyme in this species is believed to be ubiquinone. Couples the redox reaction to proton translocation (for every two electrons transferred, four hydrogen ions are translocated across the cytoplasmic membrane), and thus conserves the redox energy in a proton gradient. This chain is NADH-quinone oxidoreductase subunit B, found in Methylobacterium radiotolerans (strain ATCC 27329 / DSM 1819 / JCM 2831 / NBRC 15690 / NCIMB 10815 / 0-1).